The following is a 143-amino-acid chain: Transcription antitermination protein NusB (143 aa).

It belongs to the NusB family.

Functionally, involved in transcription antitermination. Required for transcription of ribosomal RNA (rRNA) genes. Binds specifically to the boxA antiterminator sequence of the ribosomal RNA (rrn) operons. The sequence is that of Transcription antitermination protein NusB from Streptomyces griseus subsp. griseus (strain JCM 4626 / CBS 651.72 / NBRC 13350 / KCC S-0626 / ISP 5235).